A 705-amino-acid polypeptide reads, in one-letter code: Polyribonucleotide nucleotidyltransferase (705 aa).

2 residues coordinate Mg(2+): D486 and D492. Residues 553 to 612 form the KH domain; that stretch reads PRIYTMKINPEKIKDVIGKGGSVIRALTDETGTTIEIEDDGTIKIAATDGDKAKHAIRRI. The 69-residue stretch at 622-690 folds into the S1 motif domain; that stretch reads GRIYAGKVTR…RQGRIRLSIK (69 aa).

It belongs to the polyribonucleotide nucleotidyltransferase family. As to quaternary structure, component of the RNA degradosome, which is a multiprotein complex involved in RNA processing and mRNA degradation. Mg(2+) is required as a cofactor.

Its subcellular location is the cytoplasm. The enzyme catalyses RNA(n+1) + phosphate = RNA(n) + a ribonucleoside 5'-diphosphate. In terms of biological role, involved in mRNA degradation. Catalyzes the phosphorolysis of single-stranded polyribonucleotides processively in the 3'- to 5'-direction. This chain is Polyribonucleotide nucleotidyltransferase, found in Yersinia pestis bv. Antiqua (strain Nepal516).